A 147-amino-acid chain; its full sequence is Interleukin-4 (147 aa).

Positions 1 to 19 are cleaved as a signal peptide; it reads MGLRPQLAAILLCLLACTG. N20, N61, N90, and N117 each carry an N-linked (GlcNAc...) asparagine glycan. 2 disulfides stabilise this stretch: C47–C87 and C69–C114.

This sequence belongs to the IL-4/IL-13 family.

The protein localises to the secreted. Functionally, participates in at least several B-cell activation processes as well as of other cell types. It is a costimulator of DNA-synthesis. It induces the expression of class II MHC molecules on resting B-cells. It enhances both secretion and cell surface expression of IgE and IgG1. It also regulates the expression of the low affinity Fc receptor for IgE (CD23) on both lymphocytes and monocytes. Positively regulates IL31RA expression in macrophages. Stimulates autophagy in dendritic cells by interfering with mTORC1 signaling and through the induction of RUFY4. In Mesocricetus auratus (Golden hamster), this protein is Interleukin-4 (IL4).